Consider the following 360-residue polypeptide: MGVKDILSRKTGVIVGDDVLRLFQHAQEKVFAIPAINVTSSSTVVAALEAARDKNSPIILQVSQGGAAFFAGKGVPNGKQEASVAGAIAAAHYIRSIAPSYGIPVVLHTDHCAKKLLPWLDGMLDADECYFKLHNEPLFSSHMIDLSEESVEWNIETTAKYLKRAAPMKQWLEMEIGITGGEEDGVNNESVDNNSLYTQPEDIYTIYKTLSAISPYFSIAAGFGNVHGVYKPGNVRLHPELLSKHQAYVKEKTGSSKNKPVYLVFHGGSGSTKAEFKEAISYGVVKVNLDTDLQYAYLSGVRDFVLKKKDYLMSAVGNPEGEDKPNKKYFDPRVWIREGEKTMSARVQEAFDDFNTSNQL.

Ser63 is a binding site for D-glyceraldehyde 3-phosphate. Asp110 acts as the Proton donor in catalysis. The Zn(2+) site is built by His111, Asp145, Glu175, and His227. Gly228 is a dihydroxyacetone phosphate binding site. His266 serves as a coordination point for Zn(2+). 267–269 (GGS) is a dihydroxyacetone phosphate binding site.

This sequence belongs to the class II fructose-bisphosphate aldolase family. As to quaternary structure, homodimer. The cofactor is Zn(2+).

It catalyses the reaction beta-D-fructose 1,6-bisphosphate = D-glyceraldehyde 3-phosphate + dihydroxyacetone phosphate. It participates in carbohydrate degradation; glycolysis; D-glyceraldehyde 3-phosphate and glycerone phosphate from D-glucose: step 4/4. Catalyzes the aldol condensation of dihydroxyacetone phosphate (DHAP or glycerone-phosphate) with glyceraldehyde 3-phosphate (G3P) to form fructose 1,6-bisphosphate (FBP) in gluconeogenesis and the reverse reaction in glycolysis. The sequence is that of Fructose-bisphosphate aldolase 1 (FBA1) from Paracoccidioides lutzii (strain ATCC MYA-826 / Pb01) (Paracoccidioides brasiliensis).